The chain runs to 143 residues: Nucleoside diphosphate kinase (143 aa).

Lys11, Phe59, Arg87, Thr93, Arg104, and Asn114 together coordinate ATP. The Pros-phosphohistidine intermediate role is filled by His117.

This sequence belongs to the NDK family. As to quaternary structure, homotetramer. Mg(2+) is required as a cofactor.

Its subcellular location is the cytoplasm. The enzyme catalyses a 2'-deoxyribonucleoside 5'-diphosphate + ATP = a 2'-deoxyribonucleoside 5'-triphosphate + ADP. It catalyses the reaction a ribonucleoside 5'-diphosphate + ATP = a ribonucleoside 5'-triphosphate + ADP. Its function is as follows. Major role in the synthesis of nucleoside triphosphates other than ATP. The ATP gamma phosphate is transferred to the NDP beta phosphate via a ping-pong mechanism, using a phosphorylated active-site intermediate. This Escherichia coli O81 (strain ED1a) protein is Nucleoside diphosphate kinase.